Consider the following 257-residue polypeptide: Snake venom serine protease KN3 (257 aa).

Positions 1–18 (MVLIRVLANLLILQLSYA) are cleaved as a signal peptide. A propeptide spanning residues 19-24 (QKSSKL) is cleaved from the precursor. A Peptidase S1 domain is found at 25 to 248 (VVGGDECNIN…HLDWIKSIIA (224 aa)). Disulfide bonds link Cys31–Cys162, Cys49–Cys65, Cys97–Cys255, Cys141–Cys209, Cys173–Cys188, and Cys199–Cys224. Active-site charge relay system residues include His64 and Asp109. 3 N-linked (GlcNAc...) asparagine glycosylation sites follow: Asn120, Asn121, and Asn164. Catalysis depends on Ser203, which acts as the Charge relay system.

It belongs to the peptidase S1 family. Snake venom subfamily. In terms of assembly, monomer. As to expression, expressed by the venom gland.

Its subcellular location is the secreted. Snake venom serine protease that may act in the hemostasis system of the prey. This is Snake venom serine protease KN3 from Trimeresurus stejnegeri (Chinese green tree viper).